A 597-amino-acid chain; its full sequence is Membrane protein insertase YidC (597 aa).

Residues 8-28 form a helical membrane-spanning segment; sequence YFVAIALSVLILIAWQFFYVS. Residues 38-75 are disordered; that stretch reads AEKAQQAQSQPGTQQAAPGQAAPGQALPGGAIPSAAES. A compositionally biased stretch (low complexity) spans 41 to 70; that stretch reads AQQAQSQPGTQQAAPGQAAPGQALPGGAIP. 4 helical membrane-spanning segments follow: residues 372–392, 446–466, 491–511, and 535–555; these read LFGN…LIFF, WPIL…YVTI, LFGL…WPIV, and FTWM…GLVI.

It belongs to the OXA1/ALB3/YidC family. Type 1 subfamily. Interacts with the Sec translocase complex via SecD. Specifically interacts with transmembrane segments of nascent integral membrane proteins during membrane integration.

It localises to the cell inner membrane. Functionally, required for the insertion and/or proper folding and/or complex formation of integral membrane proteins into the membrane. Involved in integration of membrane proteins that insert both dependently and independently of the Sec translocase complex, as well as at least some lipoproteins. Aids folding of multispanning membrane proteins. The protein is Membrane protein insertase YidC of Sinorhizobium medicae (strain WSM419) (Ensifer medicae).